A 155-amino-acid chain; its full sequence is uncharacterized protein (155 aa).

A disordered region spans residues 1-34 (MESLQTPQHRENQDKREKEYGVKHMPMGNNAGNL). The span at 8-22 (QHRENQDKREKEYGV) shows a compositional bias: basic and acidic residues. Residues 115–135 (MSLLLLPAFSGLTWAPFLFLF) traverse the membrane as a helical segment.

It localises to the membrane. This is an uncharacterized protein from Homo sapiens (Human).